The primary structure comprises 269 residues: Putative pyruvate, phosphate dikinase regulatory protein (269 aa).

ADP is bound at residue 147–154; the sequence is GLSRTSKT.

Belongs to the pyruvate, phosphate/water dikinase regulatory protein family. PDRP subfamily.

It carries out the reaction N(tele)-phospho-L-histidyl/L-threonyl-[pyruvate, phosphate dikinase] + ADP = N(tele)-phospho-L-histidyl/O-phospho-L-threonyl-[pyruvate, phosphate dikinase] + AMP + H(+). The catalysed reaction is N(tele)-phospho-L-histidyl/O-phospho-L-threonyl-[pyruvate, phosphate dikinase] + phosphate + H(+) = N(tele)-phospho-L-histidyl/L-threonyl-[pyruvate, phosphate dikinase] + diphosphate. Its function is as follows. Bifunctional serine/threonine kinase and phosphorylase involved in the regulation of the pyruvate, phosphate dikinase (PPDK) by catalyzing its phosphorylation/dephosphorylation. In Clostridium botulinum (strain ATCC 19397 / Type A), this protein is Putative pyruvate, phosphate dikinase regulatory protein.